Here is a 55-residue protein sequence, read N- to C-terminus: Riparin-1.4 (55 aa).

Residues 1–15 (MKIIVVLAVLMLVSA) form the signal peptide. The propeptide occupies 16 to 41 (QVCLVSAAEMGHSSDNELSSRDLVKR). A disulfide bridge connects residues Cys47 and Cys53. A propeptide spanning residues 54 to 55 (NH) is cleaved from the precursor.

In terms of tissue distribution, expressed by the skin glands.

It is found in the secreted. In Crinia riparia (Streambank froglet), this protein is Riparin-1.4.